The primary structure comprises 88 residues: Large ribosomal subunit protein bL27 (88 aa).

The disordered stretch occupies residues 1–22 (MAQKKAGGSSRNGRDSAGRRLG).

It belongs to the bacterial ribosomal protein bL27 family.

The sequence is that of Large ribosomal subunit protein bL27 from Gluconobacter oxydans (strain 621H) (Gluconobacter suboxydans).